The sequence spans 179 residues: NADH dehydrogenase [ubiquinone] 1 beta subcomplex subunit 9 (179 aa).

N-acetylalanine is present on Ala-2. Ser-85 carries the post-translational modification Phosphoserine.

This sequence belongs to the complex I LYR family. In terms of assembly, mammalian complex I is composed of 45 different subunits.

It is found in the mitochondrion inner membrane. Functionally, accessory subunit of the mitochondrial membrane respiratory chain NADH dehydrogenase (Complex I), that is believed to be not involved in catalysis. Complex I functions in the transfer of electrons from NADH to the respiratory chain. The immediate electron acceptor for the enzyme is believed to be ubiquinone. This chain is NADH dehydrogenase [ubiquinone] 1 beta subcomplex subunit 9 (Ndufb9), found in Mus musculus (Mouse).